Here is a 79-residue protein sequence, read N- to C-terminus: ATP synthase subunit c (79 aa).

2 helical membrane passes run 11 to 31 (IAVAIMIGLAAIGAAIGIGIL) and 53 to 73 (FFVVMGLVDAIPMIAVGLGLY).

Belongs to the ATPase C chain family. In terms of assembly, F-type ATPases have 2 components, F(1) - the catalytic core - and F(0) - the membrane proton channel. F(1) has five subunits: alpha(3), beta(3), gamma(1), delta(1), epsilon(1). F(0) has three main subunits: a(1), b(2) and c(10-14). The alpha and beta chains form an alternating ring which encloses part of the gamma chain. F(1) is attached to F(0) by a central stalk formed by the gamma and epsilon chains, while a peripheral stalk is formed by the delta and b chains.

The protein localises to the cell membrane. F(1)F(0) ATP synthase produces ATP from ADP in the presence of a proton or sodium gradient. F-type ATPases consist of two structural domains, F(1) containing the extramembraneous catalytic core and F(0) containing the membrane proton channel, linked together by a central stalk and a peripheral stalk. During catalysis, ATP synthesis in the catalytic domain of F(1) is coupled via a rotary mechanism of the central stalk subunits to proton translocation. Functionally, key component of the F(0) channel; it plays a direct role in translocation across the membrane. A homomeric c-ring of between 10-14 subunits forms the central stalk rotor element with the F(1) delta and epsilon subunits. This is ATP synthase subunit c from Buchnera aphidicola subsp. Schizaphis graminum (strain Sg).